We begin with the raw amino-acid sequence, 699 residues long: DnaJ homolog subfamily C member 14 (699 aa).

The tract at residues 1-230 is disordered; sequence MAQKHPGEGG…RHRLGRKRSQ (230 aa). Pro residues predominate over residues 75–84; that stretch reads HGPPRGPGPP. The span at 86-102 shows a compositional bias: acidic residues; sequence AEEDPDQSEASSEESGV. Residues 117-133 show a composition bias toward polar residues; the sequence is DGNSSFLSIPSTCNCQG. A compositionally biased stretch (acidic residues) spans 163–176; that stretch reads GEDEELEGEYDEEE. Positions 203-218 are enriched in basic and acidic residues; the sequence is PAKEDTREGGRRDPRS. A compositionally biased stretch (basic residues) spans 219-228; sequence PGRHRLGRKR. The next 3 membrane-spanning stretches (helical) occupy residues 251 to 271, 301 to 321, and 327 to 347; these read AGFW…ETCG, GWAQ…AGLF, and LVGA…QLGW. A J domain is found at 444–508; that stretch reads NPFHVLGVEA…ERRKEYEMKR (65 aa). The segment at 655-699 is disordered; it reads MSNGNFFAAPQPGPGATAASKPNSTVPKGEAKPKRRKKVRRPFQR. Over residues 662 to 673 the composition is skewed to low complexity; it reads AAPQPGPGATAA. Positions 687 to 699 are enriched in basic residues; that stretch reads PKRRKKVRRPFQR.

Interacts with the FxxxFxxxF motif of DRD1 via its C-terminal domain. Interacts with pestivirus nonstructural protein NS2.

It localises to the endoplasmic reticulum membrane. Regulates the export of target proteins, such as DRD1, from the endoplasmic reticulum to the cell surface. Promotes cleavage of pestivirus polyprotein. This Bos taurus (Bovine) protein is DnaJ homolog subfamily C member 14 (DNAJC14).